A 501-amino-acid polypeptide reads, in one-letter code: Glycerol kinase (501 aa).

Residue Thr-16 coordinates ADP. The ATP site is built by Thr-16, Thr-17, and Ser-18. Thr-16 contributes to the sn-glycerol 3-phosphate binding site. Residue Arg-20 participates in ADP binding. Residues Arg-84, Glu-85, Tyr-135, and Asp-242 each contribute to the sn-glycerol 3-phosphate site. Arg-84, Glu-85, Tyr-135, Asp-242, and Gln-243 together coordinate glycerol. Positions 264 and 307 each coordinate ADP. The ATP site is built by Thr-264, Gly-307, Gln-311, and Gly-408. Residue Gly-408 coordinates ADP.

Belongs to the FGGY kinase family.

It catalyses the reaction glycerol + ATP = sn-glycerol 3-phosphate + ADP + H(+). It functions in the pathway polyol metabolism; glycerol degradation via glycerol kinase pathway; sn-glycerol 3-phosphate from glycerol: step 1/1. Functionally, key enzyme in the regulation of glycerol uptake and metabolism. Catalyzes the phosphorylation of glycerol to yield sn-glycerol 3-phosphate. This is Glycerol kinase from Saccharolobus islandicus (strain L.S.2.15 / Lassen #1) (Sulfolobus islandicus).